The following is a 154-amino-acid chain: SsrA-binding protein (154 aa).

A disordered region spans residues 126-154; that stretch reads GKKKYDKREDMKKKEAQREVERAFRERQK. The span at 131-154 shows a compositional bias: basic and acidic residues; it reads DKREDMKKKEAQREVERAFRERQK.

The protein belongs to the SmpB family.

Its subcellular location is the cytoplasm. Its function is as follows. Required for rescue of stalled ribosomes mediated by trans-translation. Binds to transfer-messenger RNA (tmRNA), required for stable association of tmRNA with ribosomes. tmRNA and SmpB together mimic tRNA shape, replacing the anticodon stem-loop with SmpB. tmRNA is encoded by the ssrA gene; the 2 termini fold to resemble tRNA(Ala) and it encodes a 'tag peptide', a short internal open reading frame. During trans-translation Ala-aminoacylated tmRNA acts like a tRNA, entering the A-site of stalled ribosomes, displacing the stalled mRNA. The ribosome then switches to translate the ORF on the tmRNA; the nascent peptide is terminated with the 'tag peptide' encoded by the tmRNA and targeted for degradation. The ribosome is freed to recommence translation, which seems to be the essential function of trans-translation. In Anoxybacillus flavithermus (strain DSM 21510 / WK1), this protein is SsrA-binding protein.